The primary structure comprises 550 residues: Flagellin (550 aa).

It belongs to the bacterial flagellin family.

It localises to the secreted. Its subcellular location is the bacterial flagellum. Flagellin is the subunit protein which polymerizes to form the filaments of bacterial flagella. In Shigella flexneri, this protein is Flagellin (fliC).